The chain runs to 558 residues: Ankyrin repeat protein OPG189 (558 aa).

ANK repeat units lie at residues 65–95, 169–205, 209–239, 243–272, 276–304, 339–368, and 372–401; these read YGEN…NINK, YGCT…DVDK, YGNT…NIDS, NRYT…NVNA, FGTT…ELEI, YNET…DFET, and SGCT…SLKI.

The protein belongs to the orthopoxvirus OPG189 protein family.

Its function is as follows. Contributes to viral release without involving rearrangement of host actin. This is Ankyrin repeat protein OPG189 (OPG189) from Vaccinia virus (strain Western Reserve) (VACV).